We begin with the raw amino-acid sequence, 512 residues long: MEAANEPVNGGSVQIRTENNERRKLPNFLQSVNMKYVKLGYHYLITHLFKLCLVPLMAVLVTEISRLTTDDLYQIWLHLQYNLVAFIFLSALAIFGSTVYIMSRPRSVYLVDYSCYLPPESLQVKYQKFMDHSKLIEDFNESSLEFQRKILERSGLGEETYLPEALHCIPPRPTMMAAREESEQVMFGALDKLFENTKINPRDIGVLVVNCSLFNPTPSLSAMIVNKYKLRGNVKSFNLGGMGCSAGVISIDLAKDMLQVHRNTYAVVVSTENITQNWYFGNKKAMLIPNCLFRVGGSAILLSNKGKDRRRSKYKLVHTVRTHKGAVEKAFNCVYQEQDDNGKTGVSLSKDLMAIAGEALKANITTLGPLVLPISEQILFFMTLVTKKLFNSKLKPYIPDFKLAFDHFCIHAGGRAVIDELEKNLQLSQTHVEASRMTLHRFGNTSSSSIWYELAYIEAKGRMKKGNRVWQIAFGSGFKCNSAVWVALNNVKPSVSSPWEHCIDRYPVKLDF.

2 consecutive transmembrane segments (helical) span residues 44-64 and 83-103; these read LITH…VTEI and LVAF…YIMS. Positions 100 to 389 constitute an FAE domain; the sequence is YIMSRPRSVY…FFMTLVTKKL (290 aa). Active-site residues include cysteine 244, histidine 323, histidine 407, histidine 411, histidine 440, and asparagine 444.

It belongs to the thiolase-like superfamily. Chalcone/stilbene synthases family. In terms of tissue distribution, expressed in seedlings, stems, leaves, flowers and siliques. Expressed in roots, leaves, and stems, including epidermis, silique walls, sepals, the upper portion of the styles, and seed coats, but not in developing embryos.

The protein localises to the endoplasmic reticulum membrane. The enzyme catalyses a very-long-chain acyl-CoA + malonyl-CoA + H(+) = a very-long-chain 3-oxoacyl-CoA + CO2 + CoA. It participates in lipid metabolism; fatty acid biosynthesis. Its function is as follows. Involved in the elongation of C22 to C24 fatty acids, which are precursors for the biosynthesis of cuticular waxes, aliphatic suberins, and membrane lipids, including sphingolipids and phospholipids. This chain is 3-ketoacyl-CoA synthase 9, found in Arabidopsis thaliana (Mouse-ear cress).